Reading from the N-terminus, the 1072-residue chain is 5'-3' exoribonuclease 2 (1072 aa).

The stretch at arginine 118–asparagine 144 forms a coiled coil. A CCHC-type zinc finger spans residues arginine 269–glycine 286. A compositionally biased stretch (basic and acidic residues) spans lysine 414–glutamine 435. Disordered regions lie at residues lysine 414–phenylalanine 459, glutamine 509–threonine 577, alanine 865–glycine 911, and glycine 943–arginine 1072. Low complexity predominate over residues alanine 518–alanine 543. The segment covering glycine 892 to glycine 911 has biased composition (gly residues). Residues glycine 955–glycine 967 show a composition bias toward pro residues. Gly residues-rich tracts occupy residues alanine 983–arginine 1000, tyrosine 1025–glycine 1036, and glycine 1056–arginine 1072.

The protein belongs to the 5'-3' exonuclease family. XRN2/RAT1 subfamily. Interacts with rai1; the interaction is direct, stabilizes exr-1 protein structure and may stimulate its exoribonuclease activity. The interaction also stimulates rai1 pyrophosphohydrolase activity, probably by recruiting it to mRNA substrates.

The protein localises to the nucleus. Possesses 5'-&gt;3' exoribonuclease activity. Required for the processing of nuclear mRNA and rRNA precursors. May promote the termination of transcription by RNA polymerase II. Essential for vegetative cell growth and chromosome segregation. This chain is 5'-3' exoribonuclease 2 (exr-1), found in Neurospora crassa (strain ATCC 24698 / 74-OR23-1A / CBS 708.71 / DSM 1257 / FGSC 987).